Consider the following 484-residue polypeptide: Acetyl-coenzyme A carboxylase carboxyl transferase subunit beta, chloroplastic (484 aa).

One can recognise a CoA carboxyltransferase N-terminal domain in the interval 223–484; the sequence is LWIQCDNCYG…LHAFFPLNKN (262 aa). Zn(2+) is bound by residues cysteine 227, cysteine 230, cysteine 243, and cysteine 246. The segment at 227 to 246 adopts a C4-type zinc-finger fold; the sequence is CDNCYGLMYKKVKMNVCEQC.

The protein belongs to the AccD/PCCB family. In terms of assembly, acetyl-CoA carboxylase is a heterohexamer composed of biotin carboxyl carrier protein, biotin carboxylase and 2 subunits each of ACCase subunit alpha and ACCase plastid-coded subunit beta (accD). Zn(2+) serves as cofactor.

It localises to the plastid. The protein localises to the chloroplast stroma. It carries out the reaction N(6)-carboxybiotinyl-L-lysyl-[protein] + acetyl-CoA = N(6)-biotinyl-L-lysyl-[protein] + malonyl-CoA. It participates in lipid metabolism; malonyl-CoA biosynthesis; malonyl-CoA from acetyl-CoA: step 1/1. Its function is as follows. Component of the acetyl coenzyme A carboxylase (ACC) complex. Biotin carboxylase (BC) catalyzes the carboxylation of biotin on its carrier protein (BCCP) and then the CO(2) group is transferred by the transcarboxylase to acetyl-CoA to form malonyl-CoA. The polypeptide is Acetyl-coenzyme A carboxylase carboxyl transferase subunit beta, chloroplastic (Olimarabidopsis pumila (Dwarf rocket)).